The chain runs to 207 residues: Large ribosomal subunit protein bL25 (207 aa).

This sequence belongs to the bacterial ribosomal protein bL25 family. CTC subfamily. Part of the 50S ribosomal subunit; part of the 5S rRNA/L5/L18/L25 subcomplex. Contacts the 5S rRNA. Binds to the 5S rRNA independently of L5 and L18.

Its function is as follows. This is one of the proteins that binds to the 5S RNA in the ribosome where it forms part of the central protuberance. This is Large ribosomal subunit protein bL25 from Paraburkholderia xenovorans (strain LB400).